The chain runs to 120 residues: Large ribosomal subunit protein bL12 (120 aa).

It belongs to the bacterial ribosomal protein bL12 family. Homodimer. Part of the ribosomal stalk of the 50S ribosomal subunit. Forms a multimeric L10(L12)X complex, where L10 forms an elongated spine to which 2 to 4 L12 dimers bind in a sequential fashion. Binds GTP-bound translation factors.

In terms of biological role, forms part of the ribosomal stalk which helps the ribosome interact with GTP-bound translation factors. Is thus essential for accurate translation. This Lactobacillus helveticus (strain DPC 4571) protein is Large ribosomal subunit protein bL12.